A 130-amino-acid polypeptide reads, in one-letter code: Small ribosomal subunit protein uS9 (130 aa).

It belongs to the universal ribosomal protein uS9 family.

This Neisseria meningitidis serogroup C (strain 053442) protein is Small ribosomal subunit protein uS9.